The following is a 440-amino-acid chain: Argininosuccinate lyase (440 aa).

Belongs to the lyase 1 family. Argininosuccinate lyase subfamily.

The protein localises to the cytoplasm. It carries out the reaction 2-(N(omega)-L-arginino)succinate = fumarate + L-arginine. It participates in amino-acid biosynthesis; L-arginine biosynthesis; L-arginine from L-ornithine and carbamoyl phosphate: step 3/3. In Clostridium botulinum (strain 657 / Type Ba4), this protein is Argininosuccinate lyase.